Consider the following 446-residue polypeptide: Phosphoglucosamine mutase (446 aa).

The active-site Phosphoserine intermediate is the Ser101. 4 residues coordinate Mg(2+): Ser101, Asp240, Asp242, and Asp244. Phosphoserine is present on Ser101.

It belongs to the phosphohexose mutase family. The cofactor is Mg(2+). In terms of processing, activated by phosphorylation.

The catalysed reaction is alpha-D-glucosamine 1-phosphate = D-glucosamine 6-phosphate. Its function is as follows. Catalyzes the conversion of glucosamine-6-phosphate to glucosamine-1-phosphate. This chain is Phosphoglucosamine mutase, found in Pseudomonas entomophila (strain L48).